Consider the following 317-residue polypeptide: tRNA dimethylallyltransferase (317 aa).

14–21 (GPTAVGKT) provides a ligand contact to ATP. A substrate-binding site is contributed by 16-21 (TAVGKT). The tract at residues 39–42 (DSMQ) is interaction with substrate tRNA.

This sequence belongs to the IPP transferase family. In terms of assembly, monomer. Mg(2+) serves as cofactor.

The enzyme catalyses adenosine(37) in tRNA + dimethylallyl diphosphate = N(6)-dimethylallyladenosine(37) in tRNA + diphosphate. Functionally, catalyzes the transfer of a dimethylallyl group onto the adenine at position 37 in tRNAs that read codons beginning with uridine, leading to the formation of N6-(dimethylallyl)adenosine (i(6)A). This is tRNA dimethylallyltransferase from Bacillus thuringiensis subsp. konkukian (strain 97-27).